Consider the following 100-residue polypeptide: Large ribosomal subunit protein uL23 (100 aa).

This sequence belongs to the universal ribosomal protein uL23 family. As to quaternary structure, part of the 50S ribosomal subunit. Contacts protein L29, and trigger factor when it is bound to the ribosome.

Its function is as follows. One of the early assembly proteins it binds 23S rRNA. One of the proteins that surrounds the polypeptide exit tunnel on the outside of the ribosome. Forms the main docking site for trigger factor binding to the ribosome. The sequence is that of Large ribosomal subunit protein uL23 from Novosphingobium aromaticivorans (strain ATCC 700278 / DSM 12444 / CCUG 56034 / CIP 105152 / NBRC 16084 / F199).